Here is a 105-residue protein sequence, read N- to C-terminus: MAWTPLLLLFLSHCTGSLSQAVLTQPTSLSASPGASARLTCTLRSGISVGSYRIYWYQQKPGSPPRYLLNYYSDSDKHQGSGVPSRFSGSKDASTNAGILFISGL.

The N-terminal stretch at 1–19 (MAWTPLLLLFLSHCTGSLS) is a signal peptide. The framework-1 stretch occupies residues 20–44 (QAVLTQPTSLSASPGASARLTCTLR). The 86-residue stretch at 20–105 (QAVLTQPTSL…NAGILFISGL (86 aa)) folds into the Ig-like domain. Residues 45–53 (SGISVGSYR) are complementarity-determining-1. The interval 54-70 (IYWYQQKPGSPPRYLLN) is framework-2. Positions 71–77 (YYSDSDK) are complementarity-determining-2. Positions 78–105 (HQGSGVPSRFSGSKDASTNAGILFISGL) are framework-3.

In terms of assembly, immunoglobulins are composed of two identical heavy chains and two identical light chains; disulfide-linked.

The protein resides in the secreted. Its subcellular location is the cell membrane. Its function is as follows. Probable non-functional open reading frame (ORF) of V region of the variable domain of immunoglobulin light chains. Non-functional ORF generally cannot participate in the synthesis of a productive immunoglobulin chain due to altered V-(D)-J or switch recombination and/or splicing site (at mRNA level) and/or conserved amino acid change (protein level). Immunoglobulins, also known as antibodies, are membrane-bound or secreted glycoproteins produced by B lymphocytes. In the recognition phase of humoral immunity, the membrane-bound immunoglobulins serve as receptors which, upon binding of a specific antigen, trigger the clonal expansion and differentiation of B lymphocytes into immunoglobulins-secreting plasma cells. Secreted immunoglobulins mediate the effector phase of humoral immunity, which results in the elimination of bound antigens. The antigen binding site is formed by the variable domain of one heavy chain, together with that of its associated light chain. Thus, each immunoglobulin has two antigen binding sites with remarkable affinity for a particular antigen. The variable domains are assembled by a process called V-(D)-J rearrangement and can then be subjected to somatic hypermutations which, after exposure to antigen and selection, allow affinity maturation for a particular antigen. The sequence is that of Probable non-functional immunoglobulin lambda variable 5-48 from Homo sapiens (Human).